The following is a 315-amino-acid chain: Transaldolase (315 aa).

The Schiff-base intermediate with substrate role is filled by Lys131.

The protein belongs to the transaldolase family. Type 1 subfamily. As to quaternary structure, homodimer.

It is found in the cytoplasm. The catalysed reaction is D-sedoheptulose 7-phosphate + D-glyceraldehyde 3-phosphate = D-erythrose 4-phosphate + beta-D-fructose 6-phosphate. The protein operates within carbohydrate degradation; pentose phosphate pathway; D-glyceraldehyde 3-phosphate and beta-D-fructose 6-phosphate from D-ribose 5-phosphate and D-xylulose 5-phosphate (non-oxidative stage): step 2/3. Its function is as follows. Transaldolase is important for the balance of metabolites in the pentose-phosphate pathway. The polypeptide is Transaldolase (Haemophilus ducreyi (strain 35000HP / ATCC 700724)).